Reading from the N-terminus, the 101-residue chain is Small ribosomal subunit protein eS24 (101 aa).

Belongs to the eukaryotic ribosomal protein eS24 family.

This chain is Small ribosomal subunit protein eS24, found in Methanocaldococcus jannaschii (strain ATCC 43067 / DSM 2661 / JAL-1 / JCM 10045 / NBRC 100440) (Methanococcus jannaschii).